We begin with the raw amino-acid sequence, 169 residues long: Probable metallophosphoesterase YsnB (169 aa).

Residues D8, H10, D35, N54, H78, H107, and H109 each coordinate Mn(2+).

Belongs to the metallophosphoesterase superfamily. YfcE family. Mn(2+) is required as a cofactor.

This chain is Probable metallophosphoesterase YsnB (ysnB), found in Bacillus subtilis (strain 168).